A 365-amino-acid polypeptide reads, in one-letter code: 25S rRNA (uridine(2843)-N(3))-methyltransferase (365 aa).

It belongs to the class I-like SAM-binding methyltransferase superfamily.

It localises to the cytoplasm. It is found in the nucleus. It carries out the reaction uridine(2843) in 25S rRNA + S-adenosyl-L-methionine = N(3)-methyluridine(2843) in 25S rRNA + S-adenosyl-L-homocysteine + H(+). Its function is as follows. S-adenosyl-L-methionine-dependent methyltransferase that specifically methylates the N(3) position of uridine 2843 (m3U2843) in 25S rRNA. This chain is 25S rRNA (uridine(2843)-N(3))-methyltransferase (BMT6), found in Saccharomyces cerevisiae (strain ATCC 204508 / S288c) (Baker's yeast).